Consider the following 61-residue polypeptide: MLNIFNLICICFNSALFSSSFLFAKLPEAYAFLNPIVDFMPVIPVLFFLLAFVWQAAVSFR.

A propeptide spanning residues 1 to 24 (MLNIFNLICICFNSALFSSSFLFA) is cleaved from the precursor. A helical transmembrane segment spans residues 36-56 (IVDFMPVIPVLFFLLAFVWQA).

Belongs to the PsbK family. In terms of assembly, PSII is composed of 1 copy each of membrane proteins PsbA, PsbB, PsbC, PsbD, PsbE, PsbF, PsbH, PsbI, PsbJ, PsbK, PsbL, PsbM, PsbT, PsbX, PsbY, PsbZ, Psb30/Ycf12, at least 3 peripheral proteins of the oxygen-evolving complex and a large number of cofactors. It forms dimeric complexes.

Its subcellular location is the plastid. It is found in the chloroplast thylakoid membrane. In terms of biological role, one of the components of the core complex of photosystem II (PSII). PSII is a light-driven water:plastoquinone oxidoreductase that uses light energy to abstract electrons from H(2)O, generating O(2) and a proton gradient subsequently used for ATP formation. It consists of a core antenna complex that captures photons, and an electron transfer chain that converts photonic excitation into a charge separation. In Gossypium barbadense (Sea Island cotton), this protein is Photosystem II reaction center protein K.